The following is a 450-amino-acid chain: Ribulose bisphosphate carboxylase large chain (450 aa).

Lysine 4 carries the N6,N6,N6-trimethyllysine modification. Residues asparagine 113 and threonine 163 each coordinate substrate. The active-site Proton acceptor is the lysine 165. Lysine 167 contributes to the substrate binding site. Residues lysine 191, aspartate 193, and glutamate 194 each contribute to the Mg(2+) site. Lysine 191 bears the N6-carboxylysine mark. The active-site Proton acceptor is histidine 284. Substrate contacts are provided by arginine 285, histidine 317, and serine 369.

Belongs to the RuBisCO large chain family. Type I subfamily. As to quaternary structure, heterohexadecamer of 8 large chains and 8 small chains; disulfide-linked. The disulfide link is formed within the large subunit homodimers. It depends on Mg(2+) as a cofactor. Post-translationally, the disulfide bond which can form in the large chain dimeric partners within the hexadecamer appears to be associated with oxidative stress and protein turnover.

Its subcellular location is the plastid. It localises to the chloroplast. It carries out the reaction 2 (2R)-3-phosphoglycerate + 2 H(+) = D-ribulose 1,5-bisphosphate + CO2 + H2O. The enzyme catalyses D-ribulose 1,5-bisphosphate + O2 = 2-phosphoglycolate + (2R)-3-phosphoglycerate + 2 H(+). In terms of biological role, ruBisCO catalyzes two reactions: the carboxylation of D-ribulose 1,5-bisphosphate, the primary event in carbon dioxide fixation, as well as the oxidative fragmentation of the pentose substrate in the photorespiration process. Both reactions occur simultaneously and in competition at the same active site. The sequence is that of Ribulose bisphosphate carboxylase large chain from Sedum rubrotinctum (Jelly bean plant).